The chain runs to 501 residues: Probable cytosol aminopeptidase (501 aa).

2 residues coordinate Mn(2+): lysine 267 and aspartate 272. Lysine 279 is a catalytic residue. 3 residues coordinate Mn(2+): aspartate 290, aspartate 349, and glutamate 351. The active site involves arginine 353.

This sequence belongs to the peptidase M17 family. The cofactor is Mn(2+).

Its subcellular location is the cytoplasm. It catalyses the reaction Release of an N-terminal amino acid, Xaa-|-Yaa-, in which Xaa is preferably Leu, but may be other amino acids including Pro although not Arg or Lys, and Yaa may be Pro. Amino acid amides and methyl esters are also readily hydrolyzed, but rates on arylamides are exceedingly low.. The catalysed reaction is Release of an N-terminal amino acid, preferentially leucine, but not glutamic or aspartic acids.. In terms of biological role, presumably involved in the processing and regular turnover of intracellular proteins. Catalyzes the removal of unsubstituted N-terminal amino acids from various peptides. In Desulfovibrio desulfuricans (strain ATCC 27774 / DSM 6949 / MB), this protein is Probable cytosol aminopeptidase.